The sequence spans 214 residues: Large ribosomal subunit protein bL25 (214 aa).

The tract at residues 193-214 (PRAAAEEEDTGAEGDVEAADAE) is disordered. Acidic residues predominate over residues 198 to 214 (EEEDTGAEGDVEAADAE).

This sequence belongs to the bacterial ribosomal protein bL25 family. CTC subfamily. Part of the 50S ribosomal subunit; part of the 5S rRNA/L5/L18/L25 subcomplex. Contacts the 5S rRNA. Binds to the 5S rRNA independently of L5 and L18.

In terms of biological role, this is one of the proteins that binds to the 5S RNA in the ribosome where it forms part of the central protuberance. The polypeptide is Large ribosomal subunit protein bL25 (Nitrosococcus oceani (strain ATCC 19707 / BCRC 17464 / JCM 30415 / NCIMB 11848 / C-107)).